Consider the following 236-residue polypeptide: 7-cyano-7-deazaguanine synthase (236 aa).

7–17 (CSGGLDSVSLA) is a binding site for ATP. Positions 185, 193, 196, and 199 each coordinate Zn(2+).

It belongs to the QueC family. It depends on Zn(2+) as a cofactor.

It carries out the reaction 7-carboxy-7-deazaguanine + NH4(+) + ATP = 7-cyano-7-deazaguanine + ADP + phosphate + H2O + H(+). The protein operates within purine metabolism; 7-cyano-7-deazaguanine biosynthesis. Functionally, catalyzes the ATP-dependent conversion of 7-carboxy-7-deazaguanine (CDG) to 7-cyano-7-deazaguanine (preQ(0)). The sequence is that of 7-cyano-7-deazaguanine synthase from Rhizobium meliloti (strain 1021) (Ensifer meliloti).